Here is a 1367-residue protein sequence, read N- to C-terminus: Flocculation protein FLO11 (1367 aa).

A signal peptide spans 1 to 21 (MQRPFLLAYLVLSLLFNSALG). One can recognise a Flo11 domain in the interval 31 to 207 (SSEGTSCNSI…NIDCDNNCGG (177 aa)). 3 disulfides stabilise this stretch: C37–C201, C44–C179, and C141–C205. Positions 209 to 267 (KSSTTTSSTSESSTTTSSTSESSTTTSSTSESSTTTSSTSESSTSSSTTAPATPTTTSC) are enriched in low complexity. Disordered regions lie at residues 209–975 (KSST…TTSV) and 1008–1032 (TTTV…PTTP). A run of 45 repeats spans residues 210–219 (SSTTTSSTSE), 220–229 (SSTTTSSTSE), 230–239 (SSTTTSSTSE), 240–249 (SSTTTSSTSE), 262–274 (PTTT…KPTP), 275–287 (PTTT…KPTP), 313–327 (PVPT…SSSA), 328–342 (PVPT…SSSA), 343–354 (PVTSSTTESSSA), 355–369 (PVPT…SSSA), 370–381 (PVTSSTTESSSA), 382–393 (PVTSSTTESSSA), 394–408 (PVPT…SSSA), 409–420 (PVTSSTTESSSA), 421–432 (PVTSSTTESSSA), 433–444 (PVTSSTTESSSA), 445–456 (PVTSSTTESSSA), 457–471 (PVPT…SSSA), 472–483 (PVTSSTTESSSA), 484–498 (PVPT…SSSA), 499–510 (PVTSSTTESSSA), 511–525 (PVPT…SSSA), 526–540 (PAPT…SSSA), 541–552 (PVTSSTTESSSA), 568–579 (PVTSSTTESSSA), 580–594 (PVPT…SSSA), 595–609 (PVPT…SSSA), 610–624 (PAPT…SSSA), 625–636 (PVTSSTTESSSA), 637–651 (PVPT…SSSA), 652–666 (PVPT…SSSA), 667–681 (PVPT…SSSA), 682–693 (PVTSSTTESSSA), 694–705 (PVTSSTTESSSA), 706–720 (PVPT…SSSA), 721–735 (PVPT…SSSA), 736–750 (PVPT…SSSA), 751–762 (PVTSSTTESSSA), 763–777 (PVPT…SSSA), 778–792 (PVPT…SSSA), 808–822 (PVPT…TSSA), 838–852 (PVPT…SSSA), 865–879 (PVPT…TSSA), 937–968 (TTIT…TTVP), and 981–1012 (TTIT…TTVP). The tract at residues 210–249 (SSTTTSSTSESSTTTSSTSESSTTTSSTSESSTTTSSTSE) is 4 X 10 AA repeats, Ser/Thr-rich. A 2 X 13 AA repeats, Thr-rich region spans residues 262–287 (PTTTSCTKEKPTPPTTTSCTKEKPTP). Basic and acidic residues predominate over residues 281 to 292 (TKEKPTPPHHDT). Low complexity-rich tracts occupy residues 302–900 (TSKT…TVTP) and 910–948 (TETS…STGT). A 22 X 15 AA approximate repeats, Ser-rich region spans residues 313-852 (PVPTPSSSTT…SSSTTESSSA (540 aa)). The segment at 343–762 (PVTSSTTESS…TSSTTESSSA (420 aa)) is 15 X 12 AA repeats, Ser/Thr-rich. The N-linked (GlcNAc...) asparagine glycan is linked to N817. N-linked (GlcNAc...) asparagine glycosylation is present at N874. Positions 937-1119 (TTITTTVCST…SPKTVTTTVP (183 aa)) are 3 X 32 AA tandem repeats, Thr-rich. Residues 949–961 (NSAGETTSGCSPK) are compositionally biased toward polar residues. Residues 962-975 (TVTTTVPTTTTTSV) are compositionally biased toward low complexity. The span at 1014-1032 (STSPSETASESTTTSPTTP) shows a compositional bias: low complexity. A 5-3 repeat occupies 1088-1119 (TTITTTVCSTGTNSAGETTSGCSPKTVTTTVP). The GPI-anchor amidated glycine moiety is linked to residue G1346. Positions 1347-1367 (AANIKVLGNFMWLLLALPVVF) are cleaved as a propeptide — removed in mature form.

This sequence belongs to the flocculin family. Highly divergent. Extensively O-mannosylated. Post-translationally, the GPI-anchor is attached to the protein in the endoplasmic reticulum and serves to target the protein to the cell surface. There, the glucosamine-inositol phospholipid moiety is cleaved off and the GPI-modified mannoprotein is covalently attached via its lipidless GPI glycan remnant to the 1,6-beta-glucan of the outer cell wall layer. In terms of processing, a soluble form is probably produced by proteolytic cleavage at the cell surface (shedding).

The protein localises to the secreted. Its subcellular location is the cell wall. It is found in the membrane. In terms of biological role, homophilic binding protein that enables kin discrimination in heterogeneous yeast populations by mediating homotypic cell-cell interactions during flocculation, a reversible and asexual process in which cells adhere to form aggregates (flocs). Plays a role in cell-substrate adhesion, haploid invasive growth, diploid pseudohyphae formation and biofilm (flor) development. Adhesive activity is inhibited by mannose, but not by glucose, maltose, sucrose or galactose. In Saccharomyces cerevisiae (strain ATCC 204508 / S288c) (Baker's yeast), this protein is Flocculation protein FLO11.